The sequence spans 380 residues: Chaperone protein DnaJ (380 aa).

In terms of domain architecture, J spans 5–70 (DYYEVLGVER…SKRAAYDQYG (66 aa)). The CR-type zinc finger occupies 139–217 (GTTVNIRVPT…CHGEGRVEES (79 aa)). Zn(2+)-binding residues include cysteine 152, cysteine 155, cysteine 169, cysteine 172, cysteine 191, cysteine 194, cysteine 205, and cysteine 208. CXXCXGXG motif repeat units follow at residues 152–159 (CKPCDGSG), 169–176 (CPTCGGIG), 191–198 (CPRCHGHG), and 205–212 (CDSCHGEG).

It belongs to the DnaJ family. Homodimer. Zn(2+) serves as cofactor.

The protein localises to the cytoplasm. Functionally, participates actively in the response to hyperosmotic and heat shock by preventing the aggregation of stress-denatured proteins and by disaggregating proteins, also in an autonomous, DnaK-independent fashion. Unfolded proteins bind initially to DnaJ; upon interaction with the DnaJ-bound protein, DnaK hydrolyzes its bound ATP, resulting in the formation of a stable complex. GrpE releases ADP from DnaK; ATP binding to DnaK triggers the release of the substrate protein, thus completing the reaction cycle. Several rounds of ATP-dependent interactions between DnaJ, DnaK and GrpE are required for fully efficient folding. Also involved, together with DnaK and GrpE, in the DNA replication of plasmids through activation of initiation proteins. The protein is Chaperone protein DnaJ of Pseudomonas syringae pv. tomato (strain ATCC BAA-871 / DC3000).